Reading from the N-terminus, the 1035-residue chain is Beta-galactosidase (1035 aa).

Positions 101 and 199 each coordinate substrate. Position 199 (aspartate 199) interacts with Na(+). The Mg(2+) site is built by glutamate 415, histidine 417, and glutamate 460. Substrate is bound by residues glutamate 460 and 540-543; that span reads EYAH. Glutamate 460 serves as the catalytic Proton donor. Residue glutamate 540 is the Nucleophile of the active site. Asparagine 600 is a binding site for Mg(2+). Phenylalanine 604 and asparagine 607 together coordinate Na(+). Residues asparagine 607 and tryptophan 1011 each coordinate substrate.

Belongs to the glycosyl hydrolase 2 family. In terms of assembly, homotetramer. Mg(2+) serves as cofactor. It depends on Na(+) as a cofactor.

The catalysed reaction is Hydrolysis of terminal non-reducing beta-D-galactose residues in beta-D-galactosides.. The sequence is that of Beta-galactosidase from Psychromonas ingrahamii (strain DSM 17664 / CCUG 51855 / 37).